The chain runs to 353 residues: Holliday junction branch migration complex subunit RuvB (353 aa).

A large ATPase domain (RuvB-L) region spans residues 4 to 190 (TDKLQAPRVI…FGIVARLEFY (187 aa)). Residues Leu-29, Arg-30, Gly-71, Lys-74, Thr-75, Thr-76, 137–139 (EDF), Arg-180, Tyr-190, and Arg-227 each bind ATP. Position 75 (Thr-75) interacts with Mg(2+). The small ATPAse domain (RuvB-S) stretch occupies residues 191–261 (TPHELAYIVG…VADAALLMLD (71 aa)). Positions 264 to 353 (HLGLDLMDRK…DESAELFSAP (90 aa)) are head domain (RuvB-H). DNA is bound by residues Arg-319 and Arg-324.

The protein belongs to the RuvB family. Homohexamer. Forms an RuvA(8)-RuvB(12)-Holliday junction (HJ) complex. HJ DNA is sandwiched between 2 RuvA tetramers; dsDNA enters through RuvA and exits via RuvB. An RuvB hexamer assembles on each DNA strand where it exits the tetramer. Each RuvB hexamer is contacted by two RuvA subunits (via domain III) on 2 adjacent RuvB subunits; this complex drives branch migration. In the full resolvosome a probable DNA-RuvA(4)-RuvB(12)-RuvC(2) complex forms which resolves the HJ.

The protein localises to the cytoplasm. It catalyses the reaction ATP + H2O = ADP + phosphate + H(+). The RuvA-RuvB-RuvC complex processes Holliday junction (HJ) DNA during genetic recombination and DNA repair, while the RuvA-RuvB complex plays an important role in the rescue of blocked DNA replication forks via replication fork reversal (RFR). RuvA specifically binds to HJ cruciform DNA, conferring on it an open structure. The RuvB hexamer acts as an ATP-dependent pump, pulling dsDNA into and through the RuvAB complex. RuvB forms 2 homohexamers on either side of HJ DNA bound by 1 or 2 RuvA tetramers; 4 subunits per hexamer contact DNA at a time. Coordinated motions by a converter formed by DNA-disengaged RuvB subunits stimulates ATP hydrolysis and nucleotide exchange. Immobilization of the converter enables RuvB to convert the ATP-contained energy into a lever motion, pulling 2 nucleotides of DNA out of the RuvA tetramer per ATP hydrolyzed, thus driving DNA branch migration. The RuvB motors rotate together with the DNA substrate, which together with the progressing nucleotide cycle form the mechanistic basis for DNA recombination by continuous HJ branch migration. Branch migration allows RuvC to scan DNA until it finds its consensus sequence, where it cleaves and resolves cruciform DNA. This Aromatoleum aromaticum (strain DSM 19018 / LMG 30748 / EbN1) (Azoarcus sp. (strain EbN1)) protein is Holliday junction branch migration complex subunit RuvB.